We begin with the raw amino-acid sequence, 37 residues long: uncharacterized protein (37 aa).

Positions 1-23 (MLNFSLCLYPVFILNKLVLRTQS) are cleaved as a signal peptide.

This sequence belongs to the orthopoxviruses VACWR204.5 protein family.

This is an uncharacterized protein from Vaccinia virus (strain Western Reserve) (VACV).